Here is a 443-residue protein sequence, read N- to C-terminus: COP9 signalosome complex subunit 2 (443 aa).

The interval 1–275 (MSDMEDDFMC…DESGSPRRTT (275 aa)) is mediates interaction with NIF3L1. The 163-residue stretch at 254–416 (AHTDFFEAFK…QLLELDHQKR (163 aa)) folds into the PCI domain.

It belongs to the CSN2 family. Component of the CSN complex, composed of COPS1/GPS1, COPS2, COPS3, COPS4, COPS5, COPS6, COPS7 (COPS7A or COPS7B), COPS8 and COPS9 isoform 1. In the complex, it probably interacts directly with COPS1, COPS4, COPS5, COPS6 and COPS7 (COPS7A or COPS7B). Specifically interacts with the ligand binding domain of the thyroid receptor (TR). Does not require the presence of thyroid hormone for its interaction. Interacts with CUL1 and CUL2. Interacts with IRF8/ICSBP1 and with nuclear receptors NR2F1 and NR0B1. Interacts with NIF3L1. Phosphorylated by CK2 and PKD kinases.

It localises to the cytoplasm. The protein localises to the nucleus. Functionally, essential component of the COP9 signalosome complex (CSN), a complex involved in various cellular and developmental processes. The CSN complex is an essential regulator of the ubiquitin (Ubl) conjugation pathway by mediating the deneddylation of the cullin subunits of SCF-type E3 ligase complexes, leading to decrease the Ubl ligase activity of SCF-type complexes such as SCF, CSA or DDB2. The complex is also involved in phosphorylation of p53/TP53, c-jun/JUN, IkappaBalpha/NFKBIA, ITPK1 and IRF8/ICSBP, possibly via its association with CK2 and PKD kinases. CSN-dependent phosphorylation of TP53 and JUN promotes and protects degradation by the Ubl system, respectively. Involved in early stage of neuronal differentiation via its interaction with NIF3L1. This Homo sapiens (Human) protein is COP9 signalosome complex subunit 2 (COPS2).